The sequence spans 391 residues: Phosphoglycerate kinase (391 aa).

Substrate contacts are provided by residues 21–23 (DLN), R36, 59–62 (HLGR), R113, and R146. ATP-binding positions include K197, E319, and 345–348 (GGDT).

This sequence belongs to the phosphoglycerate kinase family. Monomer.

The protein localises to the cytoplasm. It catalyses the reaction (2R)-3-phosphoglycerate + ATP = (2R)-3-phospho-glyceroyl phosphate + ADP. Its pathway is carbohydrate degradation; glycolysis; pyruvate from D-glyceraldehyde 3-phosphate: step 2/5. This is Phosphoglycerate kinase from Shewanella denitrificans (strain OS217 / ATCC BAA-1090 / DSM 15013).